We begin with the raw amino-acid sequence, 134 residues long: Large ribosomal subunit protein bL20 (134 aa).

This sequence belongs to the bacterial ribosomal protein bL20 family.

Binds directly to 23S ribosomal RNA and is necessary for the in vitro assembly process of the 50S ribosomal subunit. It is not involved in the protein synthesizing functions of that subunit. The sequence is that of Large ribosomal subunit protein bL20 from Allorhizobium ampelinum (strain ATCC BAA-846 / DSM 112012 / S4) (Agrobacterium vitis (strain S4)).